Consider the following 133-residue polypeptide: Holo-[acyl-carrier-protein] synthase (133 aa).

Mg(2+)-binding residues include Asp-8 and Glu-57.

Belongs to the P-Pant transferase superfamily. AcpS family. It depends on Mg(2+) as a cofactor.

Its subcellular location is the cytoplasm. The enzyme catalyses apo-[ACP] + CoA = holo-[ACP] + adenosine 3',5'-bisphosphate + H(+). Its function is as follows. Transfers the 4'-phosphopantetheine moiety from coenzyme A to a Ser of acyl-carrier-protein. This chain is Holo-[acyl-carrier-protein] synthase, found in Chelativorans sp. (strain BNC1).